We begin with the raw amino-acid sequence, 238 residues long: 7-cyano-7-deazaguanine synthase (238 aa).

An ATP-binding site is contributed by 12–22 (FSGGQDSGTCL). Residues Cys-200, Cys-215, Cys-218, and Cys-221 each coordinate Zn(2+).

Belongs to the QueC family. It depends on Zn(2+) as a cofactor.

It carries out the reaction 7-carboxy-7-deazaguanine + NH4(+) + ATP = 7-cyano-7-deazaguanine + ADP + phosphate + H2O + H(+). It participates in purine metabolism; 7-cyano-7-deazaguanine biosynthesis. Functionally, catalyzes the ATP-dependent conversion of 7-carboxy-7-deazaguanine (CDG) to 7-cyano-7-deazaguanine (preQ(0)). The sequence is that of 7-cyano-7-deazaguanine synthase from Lawsonia intracellularis (strain PHE/MN1-00).